Consider the following 567-residue polypeptide: 2-succinyl-5-enolpyruvyl-6-hydroxy-3-cyclohexene-1-carboxylate synthase (567 aa).

This sequence belongs to the TPP enzyme family. MenD subfamily. Homodimer. Mg(2+) serves as cofactor. It depends on Mn(2+) as a cofactor. Thiamine diphosphate is required as a cofactor.

The enzyme catalyses isochorismate + 2-oxoglutarate + H(+) = 5-enolpyruvoyl-6-hydroxy-2-succinyl-cyclohex-3-ene-1-carboxylate + CO2. It participates in quinol/quinone metabolism; 1,4-dihydroxy-2-naphthoate biosynthesis; 1,4-dihydroxy-2-naphthoate from chorismate: step 2/7. The protein operates within quinol/quinone metabolism; menaquinone biosynthesis. Functionally, catalyzes the thiamine diphosphate-dependent decarboxylation of 2-oxoglutarate and the subsequent addition of the resulting succinic semialdehyde-thiamine pyrophosphate anion to isochorismate to yield 2-succinyl-5-enolpyruvyl-6-hydroxy-3-cyclohexene-1-carboxylate (SEPHCHC). The chain is 2-succinyl-5-enolpyruvyl-6-hydroxy-3-cyclohexene-1-carboxylate synthase from Yersinia pestis bv. Antiqua (strain Antiqua).